Reading from the N-terminus, the 108-residue chain is MAIIASTFGTGLSYAGELPFKPVTGGEVGRKQQRMVVVRAEGGGGINPEIRKNEDKVVDSVVVTELSKNITPYCRCWRSGTFPLCDGSHVKHNKANGDNVGPLLLKKQ.

Residues Cys-74, Cys-76, Cys-85, and His-89 each coordinate [2Fe-2S] cluster.

It belongs to the CISD protein family. As to quaternary structure, homodimer. [2Fe-2S] cluster serves as cofactor.

The protein resides in the plastid. It is found in the chloroplast. Its subcellular location is the mitochondrion. Functionally, plays an important role in plant development, senescence, reactive oxygen homeostasis, and iron metabolism. Acts as an iron-sulfur transfer protein. This chain is CDGSH iron-sulfur domain-containing protein NEET (NEET), found in Arabidopsis thaliana (Mouse-ear cress).